The sequence spans 306 residues: tRNA pseudouridine synthase B (306 aa).

Aspartate 51 (nucleophile) is an active-site residue.

This sequence belongs to the pseudouridine synthase TruB family. Type 1 subfamily.

It catalyses the reaction uridine(55) in tRNA = pseudouridine(55) in tRNA. Responsible for synthesis of pseudouridine from uracil-55 in the psi GC loop of transfer RNAs. In Nocardia farcinica (strain IFM 10152), this protein is tRNA pseudouridine synthase B.